The sequence spans 75 residues: Sec-independent protein translocase protein TatA (75 aa).

Residues 1–21 form a helical membrane-spanning segment; the sequence is MGSFSIWHWLVVLAIVLLVFG. Positions 41–75 are disordered; that stretch reads KGMRDEDKPNAQLGDESRTQDASRTAQDEHDRNAR.

The protein belongs to the TatA/E family. In terms of assembly, the Tat system comprises two distinct complexes: a TatABC complex, containing multiple copies of TatA, TatB and TatC subunits, and a separate TatA complex, containing only TatA subunits. Substrates initially bind to the TatABC complex, which probably triggers association of the separate TatA complex to form the active translocon.

The protein resides in the cell inner membrane. Functionally, part of the twin-arginine translocation (Tat) system that transports large folded proteins containing a characteristic twin-arginine motif in their signal peptide across membranes. TatA could form the protein-conducting channel of the Tat system. The sequence is that of Sec-independent protein translocase protein TatA from Stenotrophomonas maltophilia (strain K279a).